A 368-amino-acid polypeptide reads, in one-letter code: Terpene cyclase penA (368 aa).

A run of 6 helical transmembrane segments spans residues 10–30, 81–101, 118–138, 192–212, 233–253, and 334–354; these read IILA…NGFI, LSLY…ILLM, LTGL…LLAM, LFIA…GIAH, FALA…FLSI, and LATM…YWTA.

Belongs to the membrane-bound ascI terpene cyclase family.

The protein resides in the membrane. The protein operates within secondary metabolite biosynthesis. Functionally, part of the gene cluster that mediates the biosynthesis of the indole diterpenes penitrems. The geranylgeranyl diphosphate (GGPP) synthase penG catalyzes the first step in penitrem biosynthesis via conversion of farnesyl pyrophosphate and isopentyl pyrophosphate into geranylgeranyl pyrophosphate (GGPP). Condensation of indole-3-glycerol phosphate with GGPP by the prenyl transferase penC then forms 3-geranylgeranylindole (3-GGI). Epoxidation by the FAD-dependent monooxygenase penM leads to a epoxidized-GGI that is substrate of the terpene cyclase penB for cyclization to yield paspaline. Paspaline is subsequently converted to 13-desoxypaxilline by the cytochrome P450 monooxygenase penP, the latter being then converted to paxilline by the cytochrome P450 monooxygenase penQ. Paxilline is converted to beta-paxitriol via C-10 ketoreduction by the short-chain dehydrogenase PC-15 which can be monoprenylated at the C-20 by the indole diterpene prenyltransferase penD. A two-step elimination (acetylation and elimination) process performed by the O-acetyltransferase PC-16 and the P.simplicissimum ptmI-ortholog not yet identified in P.crustosum, leads to the production of the prenylated form of penijanthine. The FAD-linked oxidoreductase ptmO then converts the prenylated form of penijanthine into PC-M5 which is in turn transformed into PC-M4 by the aromatic dimethylallyltransferase PC-22. A series of oxidation steps involving 4 cytochrome P450 monooxygenases (PC-21, PC-05, PC-23, PC-20) and a FAD-dependent monooxygenase (PC-14) are required for the transformation of PC-M4 to penitrems A and E. Synthesis of these final products is proposed to proceed via penitrems D and C (PC-21, PC-05, PC-14) and penitrems B and F (PC-21, PC-05, PC-14, PC-23). The protein is Terpene cyclase penA of Penicillium crustosum (Blue mold fungus).